The chain runs to 385 residues: Aspartate carbamoyltransferase 2, chloroplastic (385 aa).

The transit peptide at 1–30 (MTASSSLFSCSMHMEVLTPKISKWPKNFVS) directs the protein to the chloroplast. Carbamoyl phosphate-binding residues include Arg131 and Thr132. Positions 131 and 132 each coordinate UMP. Lys161 is a binding site for L-aspartate. The carbamoyl phosphate site is built by Arg182, His210, and Gln213. UMP-binding residues include Arg182 and His210. Residues Arg243 and Arg305 each coordinate UMP. The L-aspartate site is built by Arg243 and Arg305. Leu345 and Pro346 together coordinate carbamoyl phosphate.

The protein belongs to the aspartate/ornithine carbamoyltransferase superfamily. ATCase family. In terms of assembly, homotrimer.

Its subcellular location is the plastid. It localises to the chloroplast. The enzyme catalyses carbamoyl phosphate + L-aspartate = N-carbamoyl-L-aspartate + phosphate + H(+). Its pathway is pyrimidine metabolism; UMP biosynthesis via de novo pathway; (S)-dihydroorotate from bicarbonate: step 2/3. Its activity is regulated as follows. Feedback inhibited by UMP. Functionally, catalyzes the condensation of carbamoyl phosphate and aspartate to form carbamoyl aspartate and inorganic phosphate, the committed step in the de novo pyrimidine nucleotide biosynthesis pathway. This chain is Aspartate carbamoyltransferase 2, chloroplastic (PYRB2), found in Pisum sativum (Garden pea).